The sequence spans 271 residues: 2-amino-3,7-dideoxy-D-threo-hept-6-ulosonate synthase (271 aa).

The active-site Proton acceptor is Asp33. Residues 33–37 (DHGVS) and 153–155 (YPR) contribute to the 1-deoxy-D-threo-hexo-2,5-diulose 6-phosphate site. Tyr153 functions as the Proton donor in the catalytic mechanism. Residue Lys184 is the Schiff-base intermediate with substrate of the active site. 1-deoxy-D-threo-hexo-2,5-diulose 6-phosphate contacts are provided by residues 209–210 (GG) and 236–237 (GR).

Belongs to the DeoC/FbaB aldolase family. ADHS subfamily. As to quaternary structure, homodecamer.

The enzyme catalyses 1-deoxy-D-threo-hexo-2,5-diulose 6-phosphate + L-aspartate 4-semialdehyde = 2,3-dioxopropyl phosphate + 2-amino-2,3,7-trideoxy-D-lyxo-hept-6-ulosonate. Its function is as follows. Catalyzes a transaldol reaction between 6-deoxy-5-ketofructose 1-phosphate (DKFP) and L-aspartate semialdehyde (ASA) with an elimination of hydroxypyruvaldehyde phosphate to yield 2-amino-3,7-dideoxy-D-threo-hept-6-ulosonate (ADH). Plays a key role in an alternative pathway of the biosynthesis of 3-dehydroquinate (DHQ), which is involved in the canonical pathway for the biosynthesis of aromatic amino acids. The sequence is that of 2-amino-3,7-dideoxy-D-threo-hept-6-ulosonate synthase from Methanococcus aeolicus (strain ATCC BAA-1280 / DSM 17508 / OCM 812 / Nankai-3).